The sequence spans 229 residues: Synaptogyrin-3 (229 aa).

Residue M1 is modified to N-acetylmethionine. The 153-residue stretch at 20-172 (FARRPQTLLR…LTVKALQRFR (153 aa)) folds into the MARVEL domain. 4 consecutive transmembrane segments (helical) span residues 30–50 (VVSW…GYVN), 70–90 (FGVV…LLDV), 105–125 (VLLD…GFCF), and 148–168 (AAIA…VKAL). Over residues 209 to 223 (QSPPFTETLDTSSKG) the composition is skewed to polar residues. Positions 209-229 (QSPPFTETLDTSSKGYQVPAY) are disordered.

The protein belongs to the synaptogyrin family. In terms of assembly, interacts (via N-terminus) with SLC6A3 (via N-terminus). May interact with VMAT2. Specifically expressed in brain. Found in the brain across the dorsal and ventral corpus striatum as well as in the cortex.

The protein localises to the cytoplasmic vesicle. It is found in the secretory vesicle. The protein resides in the synaptic vesicle membrane. Its subcellular location is the synapse. May play a role in regulated exocytosis. May indirectly regulate the activity of the plasma membrane dopamine transporter SLC6A3 and thereby regulate dopamine transport back from the synaptic cleft into the presynaptic terminal. In Mus musculus (Mouse), this protein is Synaptogyrin-3.